The following is a 548-amino-acid chain: Membrane protein insertase YidC (548 aa).

Residues 6-26 (NLLVIALLFVSFMIWQAWEQD) traverse the membrane as a helical segment. The disordered stretch occupies residues 28-55 (NPQPQAQQTTQTTTTAAGSAADQGVPAS). Residues 30–50 (QPQAQQTTQTTTTAAGSAADQ) show a composition bias toward low complexity. Transmembrane regions (helical) follow at residues 350–370 (FVGN…GIMY), 420–440 (LGGC…YYML), 458–478 (LSAQ…MFFI), and 499–519 (PVIF…YYIV).

It belongs to the OXA1/ALB3/YidC family. Type 1 subfamily. Interacts with the Sec translocase complex via SecD. Specifically interacts with transmembrane segments of nascent integral membrane proteins during membrane integration.

It is found in the cell inner membrane. In terms of biological role, required for the insertion and/or proper folding and/or complex formation of integral membrane proteins into the membrane. Involved in integration of membrane proteins that insert both dependently and independently of the Sec translocase complex, as well as at least some lipoproteins. Aids folding of multispanning membrane proteins. The sequence is that of Membrane protein insertase YidC from Shigella flexneri.